Reading from the N-terminus, the 577-residue chain is Aspartate--tRNA ligase (577 aa).

L-aspartate is bound at residue E171. The aspartate stretch occupies residues 195–198; that stretch reads QLFK. R217 serves as a coordination point for L-aspartate. Residues 217-219 and Q226 contribute to the ATP site; that span reads RDE. An L-aspartate-binding site is contributed by H437. E472 provides a ligand contact to ATP. R479 is an L-aspartate binding site. Position 524 to 527 (524 to 527) interacts with ATP; sequence GFDR.

The protein belongs to the class-II aminoacyl-tRNA synthetase family. Type 1 subfamily. As to quaternary structure, homodimer.

Its subcellular location is the cytoplasm. The catalysed reaction is tRNA(Asp) + L-aspartate + ATP = L-aspartyl-tRNA(Asp) + AMP + diphosphate. In terms of biological role, catalyzes the attachment of L-aspartate to tRNA(Asp) in a two-step reaction: L-aspartate is first activated by ATP to form Asp-AMP and then transferred to the acceptor end of tRNA(Asp). In Deinococcus deserti (strain DSM 17065 / CIP 109153 / LMG 22923 / VCD115), this protein is Aspartate--tRNA ligase.